The chain runs to 242 residues: Ubiquinone biosynthesis O-methyltransferase (242 aa).

S-adenosyl-L-methionine is bound by residues R44, G64, D85, and M129.

This sequence belongs to the methyltransferase superfamily. UbiG/COQ3 family.

The catalysed reaction is a 3-demethylubiquinol + S-adenosyl-L-methionine = a ubiquinol + S-adenosyl-L-homocysteine + H(+). The enzyme catalyses a 3-(all-trans-polyprenyl)benzene-1,2-diol + S-adenosyl-L-methionine = a 2-methoxy-6-(all-trans-polyprenyl)phenol + S-adenosyl-L-homocysteine + H(+). It functions in the pathway cofactor biosynthesis; ubiquinone biosynthesis. Functionally, O-methyltransferase that catalyzes the 2 O-methylation steps in the ubiquinone biosynthetic pathway. The protein is Ubiquinone biosynthesis O-methyltransferase of Yersinia enterocolitica serotype O:8 / biotype 1B (strain NCTC 13174 / 8081).